A 198-amino-acid chain; its full sequence is Ras-related protein RabH (198 aa).

Residue 14–21 participates in GTP binding; it reads GDWNVGKS. The Effector region signature appears at 36–44; the sequence is TKLSMGEHF. Residues 62–66 and 120–123 contribute to the GTP site; these read DTSGM and SKFD. Position 195 is a cysteine methyl ester (cysteine 195). The S-geranylgeranyl cysteine moiety is linked to residue cysteine 195. Positions 196–198 are cleaved as a propeptide — removed in mature form; it reads SIN.

The protein belongs to the small GTPase superfamily. Rab family.

It is found in the cell membrane. This Dictyostelium discoideum (Social amoeba) protein is Ras-related protein RabH (rabH).